A 379-amino-acid polypeptide reads, in one-letter code: Protein RecA (379 aa).

Position 79–86 (79–86 (GPESSGKT)) interacts with ATP.

The protein belongs to the RecA family.

Its subcellular location is the cytoplasm. Its function is as follows. Can catalyze the hydrolysis of ATP in the presence of single-stranded DNA, the ATP-dependent uptake of single-stranded DNA by duplex DNA, and the ATP-dependent hybridization of homologous single-stranded DNAs. It interacts with LexA causing its activation and leading to its autocatalytic cleavage. The polypeptide is Protein RecA (Streptococcus uberis (strain ATCC BAA-854 / 0140J)).